The sequence spans 187 residues: UPF0301 protein ESA_00394 (187 aa).

This sequence belongs to the UPF0301 (AlgH) family.

The protein is UPF0301 protein ESA_00394 of Cronobacter sakazakii (strain ATCC BAA-894) (Enterobacter sakazakii).